A 292-amino-acid chain; its full sequence is Release factor glutamine methyltransferase (292 aa).

Residues 126–130 (GTGTG), aspartate 157, tryptophan 184, and asparagine 198 contribute to the S-adenosyl-L-methionine site. 198 to 201 (NPPY) lines the substrate pocket.

Belongs to the protein N5-glutamine methyltransferase family. PrmC subfamily.

It carries out the reaction L-glutaminyl-[peptide chain release factor] + S-adenosyl-L-methionine = N(5)-methyl-L-glutaminyl-[peptide chain release factor] + S-adenosyl-L-homocysteine + H(+). Its function is as follows. Methylates the class 1 translation termination release factors RF1/PrfA and RF2/PrfB on the glutamine residue of the universally conserved GGQ motif. This chain is Release factor glutamine methyltransferase, found in Haemophilus influenzae (strain ATCC 51907 / DSM 11121 / KW20 / Rd).